A 772-amino-acid chain; its full sequence is Potassium transporter 24 (772 aa).

Residues Met-1–Ala-23 are Cytoplasmic-facing. A helical transmembrane segment spans residues Val-24–Val-44. The Extracellular segment spans residues Tyr-45–Ala-66. A helical membrane pass occupies residues Leu-67–Leu-87. Residues Arg-88–Arg-150 lie on the Cytoplasmic side of the membrane. A helical membrane pass occupies residues Leu-151–Pro-171. The Extracellular segment spans residues Ala-172–Lys-192. The helical transmembrane segment at Tyr-193 to Gly-213 threads the bilayer. At Thr-214–Arg-216 the chain is on the cytoplasmic side. Residues Val-217–Val-237 form a helical membrane-spanning segment. The Extracellular segment spans residues Tyr-238 to Thr-265. A helical transmembrane segment spans residues Gly-266–Ala-286. Over Asp-287–Met-298 the chain is Cytoplasmic. The chain crosses the membrane as a helical span at residues Ala-299–Ile-319. The Extracellular portion of the chain corresponds to Ser-320–Pro-344. Residues Val-345–Phe-365 traverse the membrane as a helical segment. The Cytoplasmic segment spans residues Ser-366 to Gln-392. The helical transmembrane segment at Ile-393–Phe-413 threads the bilayer. The Extracellular portion of the chain corresponds to Arg-414–Gln-423. Residues Gly-424–Leu-444 traverse the membrane as a helical segment. Over Cys-445–Ser-449 the chain is Cytoplasmic. A helical membrane pass occupies residues Ile-450–Ala-470. Residues Ser-471–Glu-477 lie on the Extracellular side of the membrane. Residues Gly-478–Tyr-498 form a helical membrane-spanning segment. At Gly-499–Val-772 the chain is on the cytoplasmic side. Positions Glu-656–Lys-684 are disordered.

It belongs to the HAK/KUP transporter (TC 2.A.72.3) family.

It localises to the membrane. Functionally, high-affinity potassium transporter. In Oryza sativa subsp. japonica (Rice), this protein is Potassium transporter 24 (HAK24).